Here is a 59-residue protein sequence, read N- to C-terminus: UPF0509 protein KPK_3153 (59 aa).

This sequence belongs to the UPF0509 family.

The chain is UPF0509 protein KPK_3153 from Klebsiella pneumoniae (strain 342).